The primary structure comprises 356 residues: MSGKTKRLMVMAAGTGGHVFPGLAVAHHLMAQGWQVRWLGTADRMEASLVPQHGIEIDFIKISGLRGKGLMAQLTAPIRIYRAVRQAQKIMRDYQPNVVLGMGGYVSGPGGLAAWLCGVPVVLHEQNGIAGLTNRWLARIAKKVLQAFPGAFPNADVVGNPVRTDVLALPLPAVRLSGREGPIRVLVIGGSQGARILNQTLPLVAASLGEQITLWHQVGKGALPEVSQAYQQAGQAGHLVVEFIDDMAAAYAWADVVVCRSGALTVSEVAAAGLPAIFVPFQHKDRQQYWNALPLEKAGAAKIIEQPQFTATSVSSLLASWDRATLLSMAERARSVAIPDATERVAAEVVAASKSA.

UDP-N-acetyl-alpha-D-glucosamine contacts are provided by residues 15–17 (TGG), N127, R163, S191, I244, 263–268 (ALTVSE), and Q288.

This sequence belongs to the glycosyltransferase 28 family. MurG subfamily.

Its subcellular location is the cell inner membrane. The catalysed reaction is di-trans,octa-cis-undecaprenyl diphospho-N-acetyl-alpha-D-muramoyl-L-alanyl-D-glutamyl-meso-2,6-diaminopimeloyl-D-alanyl-D-alanine + UDP-N-acetyl-alpha-D-glucosamine = di-trans,octa-cis-undecaprenyl diphospho-[N-acetyl-alpha-D-glucosaminyl-(1-&gt;4)]-N-acetyl-alpha-D-muramoyl-L-alanyl-D-glutamyl-meso-2,6-diaminopimeloyl-D-alanyl-D-alanine + UDP + H(+). It participates in cell wall biogenesis; peptidoglycan biosynthesis. Its function is as follows. Cell wall formation. Catalyzes the transfer of a GlcNAc subunit on undecaprenyl-pyrophosphoryl-MurNAc-pentapeptide (lipid intermediate I) to form undecaprenyl-pyrophosphoryl-MurNAc-(pentapeptide)GlcNAc (lipid intermediate II). The protein is UDP-N-acetylglucosamine--N-acetylmuramyl-(pentapeptide) pyrophosphoryl-undecaprenol N-acetylglucosamine transferase of Yersinia pestis (strain Pestoides F).